The following is a 472-amino-acid chain: DNA-cytosine methyltransferase (472 aa).

Residues 87–457 (FRFIDLFAGI…KLLEPKIKQA (371 aa)) form the SAM-dependent MTase C5-type domain. Cys177 is an active-site residue.

The protein belongs to the class I-like SAM-binding methyltransferase superfamily. C5-methyltransferase family.

It catalyses the reaction a 2'-deoxycytidine in DNA + S-adenosyl-L-methionine = a 5-methyl-2'-deoxycytidine in DNA + S-adenosyl-L-homocysteine + H(+). Functionally, this methylase recognizes the double-stranded sequence 5'-CCWGG-3', methylates C-2 on both strands. The polypeptide is DNA-cytosine methyltransferase (dcm) (Escherichia coli O157:H7).